The following is a 222-amino-acid chain: Deoxyribose-phosphate aldolase (222 aa).

The Proton donor/acceptor role is filled by aspartate 89. Catalysis depends on lysine 152, which acts as the Schiff-base intermediate with acetaldehyde. Lysine 181 functions as the Proton donor/acceptor in the catalytic mechanism.

It belongs to the DeoC/FbaB aldolase family. DeoC type 1 subfamily.

The protein localises to the cytoplasm. It carries out the reaction 2-deoxy-D-ribose 5-phosphate = D-glyceraldehyde 3-phosphate + acetaldehyde. Its pathway is carbohydrate degradation; 2-deoxy-D-ribose 1-phosphate degradation; D-glyceraldehyde 3-phosphate and acetaldehyde from 2-deoxy-alpha-D-ribose 1-phosphate: step 2/2. Catalyzes a reversible aldol reaction between acetaldehyde and D-glyceraldehyde 3-phosphate to generate 2-deoxy-D-ribose 5-phosphate. This is Deoxyribose-phosphate aldolase from Clostridium novyi (strain NT).